A 570-amino-acid polypeptide reads, in one-letter code: Urease subunit alpha (570 aa).

Residues 131–570 form the Urease domain; the sequence is GGIDSHIHFI…LPMTQRYFLF (440 aa). Residues H136, H138, and K219 each contribute to the Ni(2+) site. K219 is subject to N6-carboxylysine. A substrate-binding site is contributed by H221. Residues H248 and H274 each contribute to the Ni(2+) site. H322 (proton donor) is an active-site residue. Residue D362 participates in Ni(2+) binding.

The protein belongs to the metallo-dependent hydrolases superfamily. Urease alpha subunit family. In terms of assembly, heterotrimer of UreA (gamma), UreB (beta) and UreC (alpha) subunits. Three heterotrimers associate to form the active enzyme. Requires Ni cation as cofactor. In terms of processing, carboxylation allows a single lysine to coordinate two nickel ions.

The protein localises to the cytoplasm. The catalysed reaction is urea + 2 H2O + H(+) = hydrogencarbonate + 2 NH4(+). It participates in nitrogen metabolism; urea degradation; CO(2) and NH(3) from urea (urease route): step 1/1. The sequence is that of Urease subunit alpha from Trichodesmium erythraeum (strain IMS101).